A 99-amino-acid polypeptide reads, in one-letter code: Large ribosomal subunit protein uL23 (99 aa).

Belongs to the universal ribosomal protein uL23 family. As to quaternary structure, part of the 50S ribosomal subunit. Contacts protein L29, and trigger factor when it is bound to the ribosome.

Its function is as follows. One of the early assembly proteins it binds 23S rRNA. One of the proteins that surrounds the polypeptide exit tunnel on the outside of the ribosome. Forms the main docking site for trigger factor binding to the ribosome. The protein is Large ribosomal subunit protein uL23 of Hyphomonas neptunium (strain ATCC 15444).